The sequence spans 117 residues: Large ribosomal subunit protein uL24 (117 aa).

Belongs to the universal ribosomal protein uL24 family. Part of the 50S ribosomal subunit.

One of two assembly initiator proteins, it binds directly to the 5'-end of the 23S rRNA, where it nucleates assembly of the 50S subunit. In terms of biological role, located at the polypeptide exit tunnel on the outside of the subunit. The protein is Large ribosomal subunit protein uL24 of Methanothermobacter thermautotrophicus (strain ATCC 29096 / DSM 1053 / JCM 10044 / NBRC 100330 / Delta H) (Methanobacterium thermoautotrophicum).